We begin with the raw amino-acid sequence, 114 residues long: MSFRESDILITTAQELPGYKIVEVKGVVIGITVRSRGLGGNIAASFRSLIGGEIKEYVEMAEQARMQALERMIERAKALGANAVISVRFDSNELAQNMDEIIAYGTAVVVTKSI.

Belongs to the UPF0145 family.

The sequence is that of UPF0145 protein STK_10800 from Sulfurisphaera tokodaii (strain DSM 16993 / JCM 10545 / NBRC 100140 / 7) (Sulfolobus tokodaii).